The chain runs to 188 residues: Ribosome maturation factor RimM (188 aa).

The 74-residue stretch at 96-169 (DDEFYYADLE…TLLIDPLAAG (74 aa)) folds into the PRC barrel domain.

Belongs to the RimM family. In terms of assembly, binds ribosomal protein uS19.

Its subcellular location is the cytoplasm. Functionally, an accessory protein needed during the final step in the assembly of 30S ribosomal subunit, possibly for assembly of the head region. Essential for efficient processing of 16S rRNA. May be needed both before and after RbfA during the maturation of 16S rRNA. It has affinity for free ribosomal 30S subunits but not for 70S ribosomes. This Rhizobium etli (strain ATCC 51251 / DSM 11541 / JCM 21823 / NBRC 15573 / CFN 42) protein is Ribosome maturation factor RimM.